Consider the following 372-residue polypeptide: Glutamate 5-kinase (372 aa).

Lysine 14 contributes to the ATP binding site. Positions 54, 141, and 153 each coordinate substrate. An ATP-binding site is contributed by threonine 173–aspartate 174. Residues arginine 280–serine 358 enclose the PUA domain.

This sequence belongs to the glutamate 5-kinase family.

It is found in the cytoplasm. It carries out the reaction L-glutamate + ATP = L-glutamyl 5-phosphate + ADP. It functions in the pathway amino-acid biosynthesis; L-proline biosynthesis; L-glutamate 5-semialdehyde from L-glutamate: step 1/2. In terms of biological role, catalyzes the transfer of a phosphate group to glutamate to form L-glutamate 5-phosphate. The protein is Glutamate 5-kinase of Pseudomonas entomophila (strain L48).